We begin with the raw amino-acid sequence, 440 residues long: Transposon Ty1-DR2 Gag polyprotein (440 aa).

2 stretches are compositionally biased toward polar residues: residues 1–31 (MESQ…TTQD) and 137–168 (VGTH…TNQH). 3 disordered regions span residues 1–75 (MESQ…PQAA), 137–174 (VGTH…PPPI), and 350–440 (QQES…PGTY). Positions 299 to 401 (NNGIPINNKV…NSQSRTARAH (103 aa)) are RNA-binding. A compositionally biased stretch (basic and acidic residues) spans 363 to 372 (SPSDEKKDSR). Residues 373-409 (TYTNTTKPKSITRNSQKPNNSQSRTARAHNVSTSNNF) show a composition bias toward polar residues. Positions 429 to 440 (NKHDLHLRPGTY) are enriched in basic and acidic residues.

In terms of assembly, homotrimer.

The protein resides in the cytoplasm. Its function is as follows. Capsid protein (CA) is the structural component of the virus-like particle (VLP), forming the shell that encapsulates the retrotransposons dimeric RNA genome. The particles are assembled from trimer-clustered units and there are holes in the capsid shells that allow for the diffusion of macromolecules. CA also has nucleocapsid-like chaperone activity, promoting primer tRNA(i)-Met annealing to the multipartite primer-binding site (PBS), dimerization of Ty1 RNA and initiation of reverse transcription. This is Transposon Ty1-DR2 Gag polyprotein (TY1A-DR2) from Saccharomyces cerevisiae (strain ATCC 204508 / S288c) (Baker's yeast).